A 367-amino-acid chain; its full sequence is RYamide receptor (367 aa).

Over 1–35 (MDANTTRNESFSLDCELVNPNSTLANVYFLSAVYS) the chain is Extracellular. N-linked (GlcNAc...) asparagine glycosylation is found at N4, N8, and N21. A helical membrane pass occupies residues 36–56 (MYAIIFVVALIGNSFVCYIVL). Residues 57 to 66 (SSPPMRTVTN) are Cytoplasmic-facing. A helical transmembrane segment spans residues 67 to 87 (FFILNLAIGDVLITLLCVPFT). The Extracellular portion of the chain corresponds to 88–113 (SVSLLMQYWPFGGILCPVVNYSQALS). N-linked (GlcNAc...) asparagine glycosylation occurs at N107. A helical membrane pass occupies residues 114 to 134 (VFVSAYTLVAISIDKYMIIMW). Topologically, residues 135–143 (PLKPRISKR) are cytoplasmic. The chain crosses the membrane as a helical span at residues 144–164 (FATYIIALVWLIAGITVLPSA). Residues 165–212 (TFTTLINDENILGTSAYEQCDKYICAEEYSKVGQEYGDLYTKVLMFLQ) are Extracellular-facing. The chain crosses the membrane as a helical span at residues 213-233 (YVIPSLVLLFTYTSIGVVIWC). Over 234-258 (HRIPGEAENSRDQRIAKNKTKMIKM) the chain is Cytoplasmic. Residues 259–279 (MVTVVCVYTICWLPYNVLMIF) traverse the membrane as a helical segment. The Extracellular portion of the chain corresponds to 280–282 (KEH). Residues 283-303 (ISGSVMVYLYFPLHGLAMSHA) form a helical membrane-spanning segment. Residues 304 to 367 (CYNPIIYCYM…EITRAQPTSA (64 aa)) are Cytoplasmic-facing.

This sequence belongs to the G-protein coupled receptor 1 family.

The protein localises to the cell membrane. Its function is as follows. Receptor for the neuropeptides RYamide-1 and RYamide-2. The activity of this receptor is mediated by G proteins which activate a phosphatidyl-inositol-calcium second messenger system. RYamide-2 is the most potent activator. This chain is RYamide receptor, found in Tribolium castaneum (Red flour beetle).